A 240-amino-acid polypeptide reads, in one-letter code: Myomodulin neuropeptides 2 (240 aa).

An N-terminal signal peptide occupies residues 1-23; sequence MWKILETCSCFLVVAVLSGLGKA. Positions 23-44 are disordered; sequence AQPESFSGSAVTDDSTSGANKR. A propeptide spanning residues 24–44 is cleaved from the precursor; that stretch reads QPESFSGSAVTDDSTSGANKR. Polar residues predominate over residues 26-41; that stretch reads ESFSGSAVTDDSTSGA. Residues leucine 51 and leucine 60 each carry the leucine amide modification. 2 propeptides (connecting peptide) span residues 72-81 and 84-112; these read SGHQVPMLRA and GSPD…RDQS. Alanine 81 carries the alanine amide modification. Residue glutamine 115 is modified to Pyrrolidone carboxylic acid. Tyrosine 121 carries the post-translational modification Tyrosine amide. 10 propeptides (connecting peptide) span residues 124–147, 124–148, 124–149, 124–168, 131–168, 149–168, 150–168, 151–168, 171–190, and 171–199; these read DNNG…SNFD, DNNG…NFDL, DNNG…FDLL, DNNG…GGRY, DLLD…GGRY, LSSL…GGRY, SSLN…GGRY, SLNN…GGRY, SLPD…LVQS, and SLPD…PYSS. Isoleucine 207 carries the post-translational modification Isoleucine amide. A propeptide spanning residues 210–219 is cleaved from the precursor; it reads FSGSPRLQAK. The tract at residues 212–240 is disordered; it reads GSPRLQAKAVPRPRIGRQESQMREAKSAE. An Isoleucine amide modification is found at isoleucine 226. The propeptide occupies 227-240; it reads GRQESQMREAKSAE. Positions 227–240 are enriched in basic and acidic residues; the sequence is GRQESQMREAKSAE.

As to expression, expressed in the pedal-buccal projection neurons in the pedal ganglion.

The protein localises to the secreted. In terms of biological role, MMG2-DPs (Myomodulin gene 2-derived peptides) bias egestive feeding programs toward ingestive ones, and modulate accessory radula closer (ARC) muscle contractions. In Aplysia californica (California sea hare), this protein is Myomodulin neuropeptides 2 (MMG2).